The primary structure comprises 261 residues: 5-oxoprolinase subunit A (261 aa).

This sequence belongs to the LamB/PxpA family. As to quaternary structure, forms a complex composed of PxpA, PxpB and PxpC.

The enzyme catalyses 5-oxo-L-proline + ATP + 2 H2O = L-glutamate + ADP + phosphate + H(+). In terms of biological role, catalyzes the cleavage of 5-oxoproline to form L-glutamate coupled to the hydrolysis of ATP to ADP and inorganic phosphate. The protein is 5-oxoprolinase subunit A of Coprothermobacter proteolyticus (strain ATCC 35245 / DSM 5265 / OCM 4 / BT).